The chain runs to 243 residues: 7-cyano-7-deazaguanine synthase (243 aa).

9–19 lines the ATP pocket; it reads FSGGQDSTTCL. 4 residues coordinate Zn(2+): Cys205, Cys220, Cys223, and Cys226.

The protein belongs to the QueC family. Requires Zn(2+) as cofactor.

It catalyses the reaction 7-carboxy-7-deazaguanine + NH4(+) + ATP = 7-cyano-7-deazaguanine + ADP + phosphate + H2O + H(+). The protein operates within purine metabolism; 7-cyano-7-deazaguanine biosynthesis. Functionally, catalyzes the ATP-dependent conversion of 7-carboxy-7-deazaguanine (CDG) to 7-cyano-7-deazaguanine (preQ(0)). This chain is 7-cyano-7-deazaguanine synthase, found in Albidiferax ferrireducens (strain ATCC BAA-621 / DSM 15236 / T118) (Rhodoferax ferrireducens).